The following is a 384-amino-acid chain: Protein V (384 aa).

Disordered stretches follow at residues 1 to 23 (MDQDAFILKEDSEVEREAPGGRE) and 38 to 317 (SEPT…TKKG). The segment covering 7-20 (ILKEDSEVEREAPG) has biased composition (basic and acidic residues). Over residues 50–59 (LHNTINTPQG) the composition is skewed to polar residues. A Phosphoserine; by host modification is found at Ser68. The span at 83–101 (RSGEESRVSGRTSKPEAEA) shows a compositional bias: basic and acidic residues. Phosphoserine; by host is present on Ser125. Residues 150 to 168 (GIEDENREMAAHPDKRGED) are compositionally biased toward basic and acidic residues. Residues 191–206 (ASNNGRSMEPGSSHSA) show a composition bias toward polar residues. A phosphoserine; by host mark is found at Ser192, Ser249, Ser257, and Ser260. Zn(2+) contacts are provided by His318, Cys337, Cys341, Cys353, Cys355, Cys358, Cys362, and Cys365.

This sequence belongs to the paramyxoviruses V protein family. As to quaternary structure, interacts with host IFIH1/MDA5 and DHX58/LGP2. Interacts with host IRF3. Interacts with host RIGI regulatory protein (via CARDs domain) and host TRIM25 (via SPRY domain); these interactions prevent TRIM25-mediated ubiquitination of RIG-I and disrupts downstream RIG-I signaling.

Its subcellular location is the host cytoplasm. Plays an essential role in the inhibition of host immune response. Prevents the establishment of cellular antiviral state by blocking interferon-alpha/beta (IFN-alpha/beta) production and signaling pathway. Interacts with host IFIH1/MDA5 and DHX58/LGP2 to inhibit the transduction pathway involved in the activation of IFN-beta promoter, thus protecting the virus against cell antiviral state. Also interacts with and inhibits host IRF3. Blocks the type I interferon signaling pathway by disrupting the RIG-I signaling pathway. This Sendai virus (strain Z) (SeV) protein is Protein V (P/V/C).